The chain runs to 406 residues: [Pyruvate dehydrogenase (acetyl-transferring)] kinase isozyme 3, mitochondrial (406 aa).

Positions 131–362 (IEYKEKFGFD…DAVIYLKALS (232 aa)) constitute a Histidine kinase domain. ATP is bound at residue 247-254 (ELFKNSMR). Position 278 is an N6-succinyllysine (Lys278). ATP-binding positions include Asp287, 306-307 (ST), and 323-328 (GFGYGL). Positions 383–406 (TPEADDWSNPSSEPRDASKYKAKQ) are disordered. A compositionally biased stretch (basic and acidic residues) spans 395–406 (EPRDASKYKAKQ).

Belongs to the PDK/BCKDK protein kinase family. Homodimer. Interacts with the pyruvate dehydrogenase complex subunit DLAT, and is part of the multimeric pyruvate dehydrogenase complex that contains multiple copies of pyruvate dehydrogenase (E1), dihydrolipoamide acetyltransferase (DLAT, E2) and lipoamide dehydrogenase (DLD, E3). As to expression, expressed in heart, skeletal muscle, spinal cord, as well as fetal and adult brain.

The protein localises to the mitochondrion matrix. The catalysed reaction is L-seryl-[pyruvate dehydrogenase E1 alpha subunit] + ATP = O-phospho-L-seryl-[pyruvate dehydrogenase E1 alpha subunit] + ADP + H(+). Activated by interaction with DLAT. Inhibited by AZD7545, dichloroacetate and radicicol. Inhibits pyruvate dehydrogenase activity by phosphorylation of the E1 subunit PDHA1, and thereby regulates glucose metabolism and aerobic respiration. Can also phosphorylate PDHA2. Decreases glucose utilization and increases fat metabolism in response to prolonged fasting, and as adaptation to a high-fat diet. Plays a role in glucose homeostasis and in maintaining normal blood glucose levels in function of nutrient levels and under starvation. Plays a role in the generation of reactive oxygen species. The protein is [Pyruvate dehydrogenase (acetyl-transferring)] kinase isozyme 3, mitochondrial (PDK3) of Homo sapiens (Human).